An 828-amino-acid polypeptide reads, in one-letter code: MNSTEFTEDVEEVLKSITVKVETEAEDAALDCSVNSRTSEKHSVDSVLTALQDSSKRKQLVSDGLLDSVPGVKRRRLIPEALLAGMRNRENSSPCQGNGEQAGRGRSLGNVWPGEEEPCNDATTPSYKKPLYGISHKIMEKKNPPSGDLLNVYELFEKANASNSPSSLRLLNEPQKRDCGSTGAGTDNDPNIYFLIQKMFYMLNTLTSNMSQLHSKVDLLSLEVSRIKKQVSPTEMVAKFQPPPEYQLTAAELKQIVDQSLSGGDLACRLLVQLFPELFSDVDFSRGCSACGFAAKRKLESLHLQLIRNYVEVYYPSVKDTAVWQAECLPQLNDFFSRFWAQREMEDSQPSGQVASFFEAEQVDPGHFLDNKDQEEALSLDRSSTIASDHVVDTQDLTEFLDEASSPGEFAVFLLHRLFPELFDHRKLGEQYSCYGDGGKQELDPQRLQIIRNYTEIYFPDMQEEEAWLQQCAQRINDELEGLGLDAGSEGDPPRDDCYDSSSLPDDISVVKVEDSFEGERPGRRSKKIWLVPIDFDKLEIPQPDFEVPGADCLLSKEQLRSIYESSLSIGNFASRLLVHLFPELFTHENLRKQYNCSGSLGKKQLDPSRIKLIRHYVQLLYPRAKNDRVWTLEFVGKLDERCRRRDTEQRRSYQQQRKVHVPGPECRDLTSYAINPERFREEFEGPPLPPERSSKDFCKIPLDELVVPSPDFPVPSPYLLSDKEVREIVQQSLSVGNFAARLLVRLFPELFTAENLRLQYNHSGACNKKQLDPTRLRLIRHYVEAVYPVEKMEEVWHYECIPSIDERCRRPNRKKCDILKKAKKVEK.

Residue Lys20 forms a Glycyl lysine isopeptide (Lys-Gly) (interchain with G-Cter in SUMO); alternate linkage. Residue Lys20 forms a Glycyl lysine isopeptide (Lys-Gly) (interchain with G-Cter in SUMO1); alternate linkage. Lys20 is covalently cross-linked (Glycyl lysine isopeptide (Lys-Gly) (interchain with G-Cter in SUMO2); alternate). Residues Lys41, Lys56, Lys58, Lys73, Lys128, Lys129, Lys137, Lys142, and Lys158 each participate in a glycyl lysine isopeptide (Lys-Gly) (interchain with G-Cter in SUMO2) cross-link. The Nuclear localization signal motif lies at 56 to 58 (KRK). Ser164 bears the Phosphoserine mark. A disordered region spans residues 164–184 (SPSSLRLLNEPQKRDCGSTGA). Residue Lys176 forms a Glycyl lysine isopeptide (Lys-Gly) (interchain with G-Cter in SUMO2) linkage. Residues 242–343 (PPPEYQLTAA…DFFSRFWAQR (102 aa)) form the BEN 1 domain. Ser379 is modified (phosphoserine). One can recognise a BEN 2 domain in the interval 387–487 (ASDHVVDTQD…DELEGLGLDA (101 aa)). Residue Lys427 forms a Glycyl lysine isopeptide (Lys-Gly) (interchain with G-Cter in SUMO2) linkage. Residues 483 to 504 (LGLDAGSEGDPPRDDCYDSSSL) form a disordered region. Ser489 carries the post-translational modification Phosphoserine. Lys512 participates in a covalent cross-link: Glycyl lysine isopeptide (Lys-Gly) (interchain with G-Cter in SUMO); alternate. Lys512 is covalently cross-linked (Glycyl lysine isopeptide (Lys-Gly) (interchain with G-Cter in SUMO2); alternate). Lys528 is covalently cross-linked (Glycyl lysine isopeptide (Lys-Gly) (interchain with G-Cter in SUMO2)). The 103-residue stretch at 548–650 (VPGADCLLSK…ERCRRRDTEQ (103 aa)) folds into the BEN 3 domain. Lys700 is covalently cross-linked (Glycyl lysine isopeptide (Lys-Gly) (interchain with G-Cter in SUMO2)). A BEN 4 domain is found at 715 to 816 (VPSPYLLSDK…ERCRRPNRKK (102 aa)).

Homooligomer, probably a homooctamer. Interacts with HDAC2 and HDAC3, but not HDAC1. Interacts with SALL4. Interacts with SMARCA5/SNF2H, BAZ2A/TIP5 and USP21. Interacts with the nucleosome remodeling and histone deacetylase (NuRD) repressor complex. Interacts (via BEN domains 1 and 3) with ERCC6L (via N-terminal TPR repeat); the interaction is direct. Sumoylated at Lys-20 by SUMO1 and at Lys-512 by SUMO1, SUMO2 and SUMO3. Sumoylation probably occurs sequentially, with that of Lys-20 preceding that of Lys-512. It does not alter association with heterochromatin, but is required for the repression of transcription. Expressed at least in heart, kidney, liver, ovary and spleen, with highest levels in spleen and lowest in heart. Expressed on the surface of T-cells.

Its subcellular location is the nucleus. It localises to the nucleolus. In terms of biological role, transcriptional repressor which associates with the NoRC (nucleolar remodeling complex) complex and plays a key role in repressing rDNA transcription. The sumoylated form modulates the stability of the NoRC complex component BAZ2A/TIP5 by controlling its USP21-mediated deubiquitination. Binds to unmethylated major satellite DNA and is involved in the recruitment of the Polycomb repressive complex 2 (PRC2) to major satellites. Stimulates the ERCC6L translocase and ATPase activities. This is BEN domain-containing protein 3 (BEND3) from Homo sapiens (Human).